The chain runs to 683 residues: DNA ligase (683 aa).

NAD(+) contacts are provided by residues 43-47, 92-93, and E125; these read DAEYD and SL. Residue K127 is the N6-AMP-lysine intermediate of the active site. NAD(+)-binding residues include R148, E185, K303, and K327. Residues C421, C424, C439, and C445 each coordinate Zn(2+). In terms of domain architecture, BRCT spans 604 to 683; it reads IADNPLKGKN…QEFIALTGEN (80 aa).

The protein belongs to the NAD-dependent DNA ligase family. LigA subfamily. Requires Mg(2+) as cofactor. The cofactor is Mn(2+).

It carries out the reaction NAD(+) + (deoxyribonucleotide)n-3'-hydroxyl + 5'-phospho-(deoxyribonucleotide)m = (deoxyribonucleotide)n+m + AMP + beta-nicotinamide D-nucleotide.. Its function is as follows. DNA ligase that catalyzes the formation of phosphodiester linkages between 5'-phosphoryl and 3'-hydroxyl groups in double-stranded DNA using NAD as a coenzyme and as the energy source for the reaction. It is essential for DNA replication and repair of damaged DNA. The sequence is that of DNA ligase from Actinobacillus pleuropneumoniae serotype 5b (strain L20).